The sequence spans 73 residues: DNA gyrase inhibitor YacG (73 aa).

Residues cysteine 14, cysteine 17, cysteine 30, and cysteine 34 each coordinate Zn(2+). A disordered region spans residues 54–73 (AEQADDTAGPGAAEDDTDSH).

The protein belongs to the DNA gyrase inhibitor YacG family. In terms of assembly, interacts with GyrB. Zn(2+) is required as a cofactor.

Functionally, inhibits all the catalytic activities of DNA gyrase by preventing its interaction with DNA. Acts by binding directly to the C-terminal domain of GyrB, which probably disrupts DNA binding by the gyrase. The sequence is that of DNA gyrase inhibitor YacG from Hyphomonas neptunium (strain ATCC 15444).